We begin with the raw amino-acid sequence, 197 residues long: Probable nicotinate-nucleotide adenylyltransferase (197 aa).

This sequence belongs to the NadD family.

It catalyses the reaction nicotinate beta-D-ribonucleotide + ATP + H(+) = deamido-NAD(+) + diphosphate. It participates in cofactor biosynthesis; NAD(+) biosynthesis; deamido-NAD(+) from nicotinate D-ribonucleotide: step 1/1. Its function is as follows. Catalyzes the reversible adenylation of nicotinate mononucleotide (NaMN) to nicotinic acid adenine dinucleotide (NaAD). The polypeptide is Probable nicotinate-nucleotide adenylyltransferase (Bordetella parapertussis (strain 12822 / ATCC BAA-587 / NCTC 13253)).